The chain runs to 508 residues: MSSPDGPSFPSGPLSGGASPSGDEGFFPFVLERRDSFLGGGPGPEEPEDLALQLQQKEKDLLLAAELGKMLLERNEELRRQLETLSAQHLEREERLQQENHELRRGLAARGAEWEARAVELEGDVEALRAQLGEQRSEQQDSGRERARALSELSEQNLRLSQQLAQASQTEQELQRELDALRGQCQAQALAGAELRTRLESLQGENQMLQSRRQDLEAQIRGLREEVEKGEGRLQTTHEELLLLRRERREHSLELERARSEAGEALSALRRLQRRVSELEEESRLQDADVSAASLQSELAHSLDDGDQGQGADAPGDTPTTRSPKTRKASSPQPSPPEEILEPPKKRTSLSPAEILEEKEVEVAKLQDEISLQQAELQSLREELQRQKELRAQEDPGEALHSALSDRDEAVNKALELSLQLNRVSLERDSLSRELLRAIRQKVALTQELEAWQDDMQVVIGQQLRSQRQKELSASASSSTPRRAAPRFSLRLGPGPAGGFLSNLFRRT.

Positions 1–22 (MSSPDGPSFPSGPLSGGASPSG) are enriched in low complexity. Disordered regions lie at residues 1-27 (MSSPDGPSFPSGPLSGGASPSGDEGFF), 132-152 (LGEQRSEQQDSGRERARALSE), and 300-351 (AHSL…TSLS). Coiled-coil stretches lie at residues 64 to 300 (AAEL…SELA) and 353 to 458 (AEIL…DMQV). Basic and acidic residues predominate over residues 135–149 (QRSEQQDSGRERARA). Residues 470–491 (KELSASASSSTPRRAAPRFSLR) are disordered. A compositionally biased stretch (low complexity) spans 473–489 (SASASSSTPRRAAPRFS).

It belongs to the BICDR family. In terms of assembly, interacts with RAB13.

The protein is BICD family-like cargo adapter 2 (BICDL2) of Homo sapiens (Human).